The following is a 781-amino-acid chain: MAP7 domain-containing protein 2 (781 aa).

The segment covering 1 to 32 has biased composition (gly residues); sequence MERSGGNGGGGGGGGGGGGGYGGSGGGGGGAG. Disordered stretches follow at residues 1 to 37, 50 to 87, 120 to 567, and 597 to 628; these read MERS…PSEG, AEAA…REER, LEEQ…AAKQ, and TRKS…ANKA. 2 stretches are compositionally biased toward basic and acidic residues: residues 71-87 and 120-158; these read LKSD…REER and LEEQ…RSLE. A coiled-coil region spans residues 73-168; it reads SDERQRLAKE…RTQQLELKKK (96 aa). Low complexity predominate over residues 192–210; it reads LTLATSTPPLDTGTTTAAA. 2 stretches are compositionally biased toward polar residues: residues 211–245 and 257–267; these read ESTN…TVAI and LKSSYKSSPTR. The segment covering 318–328 has biased composition (basic and acidic residues); it reads RRCEPPEDISK. Positions 329–348 are enriched in polar residues; the sequence is RLSSPVKSKITSKTYPQSPK. Basic and acidic residues-rich tracts occupy residues 370–387, 397–436, 453–567, and 597–613; these read ETPK…EKEG, PREE…EHSA, LAEK…AAKQ, and TRKS…DPKV.

The protein belongs to the MAP7 family. In terms of assembly, interacts (via N-terminus) with microtubules; facilitates microtubule stabilization. Interacts with kinesin-1 family members, KIF5A, KIF5B and KIF5C. In terms of tissue distribution, expressed predominantly in the glomerular layer of the olfactory bulb and Sertoli cells of the testis.

The protein localises to the cytoplasm. It localises to the cytoskeleton. Its subcellular location is the microtubule organizing center. It is found in the centrosome. The protein resides in the midbody. The protein localises to the cell projection. It localises to the neuron projection. Its subcellular location is the axon. Microtubule-stabilizing protein involved in the control of cell motility and neurite outgrowth. Acts as a critical cofactor for kinesin transport; in the proximal axon regulates kinesin-1 family members, KIF5A, KIF5B and KIF5C recruitment to microtubules and contributes to kinesin-1-mediated transport in the axons. The protein is MAP7 domain-containing protein 2 (Map7d2) of Mus musculus (Mouse).